A 372-amino-acid chain; its full sequence is Peptidyl-prolyl cis-trans isomerase D (372 aa).

The 164-residue stretch at 10 to 173 folds into the PPIase cyclophilin-type domain; that stretch reads FFDIQIGQQQ…TDVTIAECGE (164 aa). The interval 174–193 is disordered; the sequence is LTGEDYDNADKQTPDATGDP. TPR repeat units lie at residues 215 to 248, 268 to 304, and 309 to 342; these read ASELKNFGNTAFKNGNIALGLEKYQKGLRYLNEF, FTLHSNSSLLANKLGQFKNGKTWATYALDVADAASAK, and AKVYYRRAVAESGLKEEDEALKDLEQASTLAPSD.

It belongs to the cyclophilin-type PPIase family. PPIase D subfamily.

It is found in the cytoplasm. The enzyme catalyses [protein]-peptidylproline (omega=180) = [protein]-peptidylproline (omega=0). PPIases accelerate the folding of proteins. It catalyzes the cis-trans isomerization of proline imidic peptide bonds in oligopeptides. This is Peptidyl-prolyl cis-trans isomerase D (cpr6) from Emericella nidulans (strain FGSC A4 / ATCC 38163 / CBS 112.46 / NRRL 194 / M139) (Aspergillus nidulans).